The primary structure comprises 351 residues: Pinopsin (351 aa).

Topologically, residues 1 to 30 are extracellular; sequence MSSNSSQAPPNGTPGPFDGPQWPYQAPQST. N4 carries an N-linked (GlcNAc...) asparagine glycan. A helical membrane pass occupies residues 31-55; it reads YVGVAVLMGTVVACASVVNGLVIVV. Over 56–67 the chain is Cytoplasmic; the sequence is SICYKKLRSPLN. Residues 68–92 traverse the membrane as a helical segment; it reads YILVNLAVADLLVTLCGSSVSLSNN. Residues 93–107 lie on the Extracellular side of the membrane; that stretch reads INGFFVFGRRMCELE. Residues C104 and C181 are joined by a disulfide bond. A helical transmembrane segment spans residues 108–127; that stretch reads GFMVSLTGIVGLWSLAILAL. Residues 128–146 are Cytoplasmic-facing; it reads ERYVVVCKPLGDFQFQRRH. A helical transmembrane segment spans residues 147-170; the sequence is AVSGCAFTWGWALLWSAPPLLGWS. Residues 171–194 are Extracellular-facing; sequence SYVPEGLRTSCGPNWYTGGSNNNS. Residue N192 is glycosylated (N-linked (GlcNAc...) asparagine). Residues 195 to 222 form a helical membrane-spanning segment; the sequence is YILSLFVTCFVLPLSLILFSYTNLLLTL. Over 223–244 the chain is Cytoplasmic; it reads RAAAAQQKEADTTQRAEREVTR. A helical membrane pass occupies residues 245 to 268; the sequence is MVIVMVMAFLLCWLPYSTFALVVA. Topologically, residues 269–276 are extracellular; it reads THKGIIIQ. Residues 277–301 traverse the membrane as a helical segment; sequence PVLASLPSYFSKTATVYNPIIYVFM. Residue K288 is modified to N6-(retinylidene)lysine. Residues 302-351 are Cytoplasmic-facing; the sequence is NKQFQSCLLEMLCCGYQPQRTGKASPGTPGPHADVTAAGLRNKVMPAHPV. 2 S-palmitoyl cysteine lipidation sites follow: C314 and C315.

It belongs to the G-protein coupled receptor 1 family. Opsin subfamily. Post-translationally, phosphorylated on some or all of the serine and threonine residues present in the C-terminal region. As to expression, pineal gland.

The protein localises to the membrane. In terms of biological role, produces a slow and prolonged phototransduction response consistent with the non-visual function of pineal photoreception. The protein is Pinopsin of Gallus gallus (Chicken).